A 350-amino-acid chain; its full sequence is Ion-translocating oxidoreductase complex subunit D (350 aa).

4 consecutive transmembrane segments (helical) span residues 20–40 (IMLL…WFFG), 42–62 (GTVL…AAIL), 89–109 (IPPL…VVIA), and 123–143 (PAMI…TSWL). The residue at position 187 (Thr-187) is an FMN phosphoryl threonine. 5 consecutive transmembrane segments (helical) span residues 214–234 (VLAG…GLFL), 242–262 (WHIP…GWLF), 267–287 (LASP…FFIL), 301–321 (LIFG…GGYP), and 322–342 (DGVA…DYYT).

It belongs to the NqrB/RnfD family. In terms of assembly, the complex is composed of six subunits: RnfA, RnfB, RnfC, RnfD, RnfE and RnfG. Requires FMN as cofactor.

It is found in the cell inner membrane. Its function is as follows. Part of a membrane-bound complex that couples electron transfer with translocation of ions across the membrane. This Klebsiella pneumoniae (strain 342) protein is Ion-translocating oxidoreductase complex subunit D.